The primary structure comprises 81 residues: GAMMA-ctenitoxin-Pn1a (81 aa).

The signal sequence occupies residues 1–16 (MKVAIVFLSLLVLAFA). Residues 17–34 (SESIEENREEFPVEESAR) constitute a propeptide that is removed on maturation. 5 disulfide bridges follow: Cys-35–Cys-49, Cys-42–Cys-55, Cys-46–Cys-81, Cys-48–Cys-65, and Cys-57–Cys-63.

It belongs to the neurotoxin 03 (Tx2) family. 05 subfamily. In terms of tissue distribution, expressed by the venom gland.

Its subcellular location is the secreted. Its function is as follows. This insecticidal neurotoxin targets two types of channels/receptors. It reversibly inhibits the N-methyl-D-aspartate (NMDA)-subtype of ionotropic glutamate receptor (GRIN). It inhibits glutamate uptake from rat brain synaptosomes, and blocks GRIN in hippocampal slices. It also acts on sodium channels of both insects and mammals. On sodium channel insects, it strongly slows down channel inactivation (EC(50)=212.5 nM) and causes an increase (105%) in peak amplitude (at 1 uM) of B.germanica sodium channel (Nav), whereas it inhibits all mammalien sodium channels tested with the following order of potency: Nav1.3/SCN3A (IC(50)=1.5 uM) &gt; Nav1.6/SCN8A &gt; Nav1.5/SCN5A &gt; Nav1.4/SCN4A &gt;= Nav1.2/SCN2A. In vivo, it is highly toxic to house fly (Musca domestica), cockroach (Periplaneta americana), and cricket (Acheta domesticus). In different rat pain models (induced by PGE2, carrageenan or glutamate), it shows antinociceptive effect that may be related to an inhibitory activity on the glutamatergic system. The protein is GAMMA-ctenitoxin-Pn1a of Phoneutria nigriventer (Brazilian armed spider).